We begin with the raw amino-acid sequence, 194 residues long: Imidazoleglycerol-phosphate dehydratase (194 aa).

This sequence belongs to the imidazoleglycerol-phosphate dehydratase family.

It is found in the cytoplasm. The enzyme catalyses D-erythro-1-(imidazol-4-yl)glycerol 3-phosphate = 3-(imidazol-4-yl)-2-oxopropyl phosphate + H2O. It functions in the pathway amino-acid biosynthesis; L-histidine biosynthesis; L-histidine from 5-phospho-alpha-D-ribose 1-diphosphate: step 6/9. The sequence is that of Imidazoleglycerol-phosphate dehydratase from Bacillus cereus (strain ZK / E33L).